The sequence spans 1116 residues: Surface layer protein (1116 aa).

The first 53 residues, 1–53 (MQDSGFKKKDRSTNIPQEQFVYTRGGEHKVMKKVVNSVLASALAITVAPMAFA), serve as a signal peptide directing secretion. 3 SLH domains span residues 54 to 117 (AEDT…KLAQ), 118 to 181 (FNTT…RGVW), and 182 to 231 (PNSM…YGTD).

The protein resides in the secreted. It is found in the cell wall. Its subcellular location is the S-layer. This is Surface layer protein from Brevibacillus choshinensis.